Reading from the N-terminus, the 317-residue chain is Malate dehydrogenase (317 aa).

NAD(+) is bound by residues 10–15 and Asp34; that span reads GGGQIG. Residues Arg83 and Arg89 each contribute to the substrate site. NAD(+)-binding positions include Asn96 and 119–121; that span reads ISN. Positions 121 and 152 each coordinate substrate. His176 acts as the Proton acceptor in catalysis.

The protein belongs to the LDH/MDH superfamily. MDH type 3 family.

It catalyses the reaction (S)-malate + NAD(+) = oxaloacetate + NADH + H(+). In terms of biological role, catalyzes the reversible oxidation of malate to oxaloacetate. This is Malate dehydrogenase from Geobacter sulfurreducens (strain ATCC 51573 / DSM 12127 / PCA).